Consider the following 329-residue polypeptide: Ubiquitin carboxyl-terminal hydrolase isozyme L5 (329 aa).

The region spanning 7–225 is the UCH catalytic domain; that stretch reads EWCLMESDPG…IRFNLMAIVS (219 aa). The residue at position 47 (Lys47) is an N6-succinyllysine. Cys88 functions as the Nucleophile in the catalytic mechanism. Residue Lys158 is modified to N6-acetyllysine. His164 acts as the Proton donor in catalysis. An N6-succinyllysine modification is found at Lys289. Residues 291-319 enclose the ULD domain; the sequence is NYLPFIMELLKTLAEHQQLIPLVEKAKEK. Positions 313–329 are interaction with ADRM1; sequence VEKAKEKQNAKKAQETK.

This sequence belongs to the peptidase C12 family. In terms of assembly, component of the 19S (PA700) regulatory complex of the 26S proteasome. Interacts with ADRM1 and NFRKB. Component of the INO80 complex; specifically part of a complex module associated with N-terminus of INO80.

The protein resides in the cytoplasm. It localises to the nucleus. The catalysed reaction is Thiol-dependent hydrolysis of ester, thioester, amide, peptide and isopeptide bonds formed by the C-terminal Gly of ubiquitin (a 76-residue protein attached to proteins as an intracellular targeting signal).. With respect to regulation, activated by ADRM1. Inhibited by interaction with NFRKB. Functionally, protease that specifically cleaves 'Lys-48'-linked polyubiquitin chains. Deubiquitinating enzyme associated with the 19S regulatory subunit of the 26S proteasome. Putative regulatory component of the INO80 complex; however is inactive in the INO80 complex and is activated by a transient interaction of the INO80 complex with the proteasome via ADRM1. In Mus musculus (Mouse), this protein is Ubiquitin carboxyl-terminal hydrolase isozyme L5 (Uchl5).